Consider the following 531-residue polypeptide: CTP synthase (531 aa).

Positions 1–267 (MTKYIIITGG…ASKILSKLNL (267 aa)) are amidoligase domain. S13 serves as a coordination point for CTP. Residue S13 coordinates UTP. 14 to 19 (SVGKGT) contacts ATP. Residue Y54 participates in L-glutamine binding. An ATP-binding site is contributed by D71. Residues D71 and E141 each coordinate Mg(2+). Residues 148–150 (DIE), 188–193 (KTKPLQ), and K224 contribute to the CTP site. Residues 188 to 193 (KTKPLQ) and K224 each bind UTP. The region spanning 292–531 (KIALVGKYTK…IGFLRAAAGV (240 aa)) is the Glutamine amidotransferase type-1 domain. Position 355 (G355) interacts with L-glutamine. C382 (nucleophile; for glutamine hydrolysis) is an active-site residue. L-glutamine contacts are provided by residues 383–386 (YGMQ), E406, and R463. Residues H507 and E509 contribute to the active site.

The protein belongs to the CTP synthase family. As to quaternary structure, homotetramer.

It carries out the reaction UTP + L-glutamine + ATP + H2O = CTP + L-glutamate + ADP + phosphate + 2 H(+). It catalyses the reaction L-glutamine + H2O = L-glutamate + NH4(+). The catalysed reaction is UTP + NH4(+) + ATP = CTP + ADP + phosphate + 2 H(+). Its pathway is pyrimidine metabolism; CTP biosynthesis via de novo pathway; CTP from UDP: step 2/2. Its activity is regulated as follows. Allosterically activated by GTP, when glutamine is the substrate; GTP has no effect on the reaction when ammonia is the substrate. The allosteric effector GTP functions by stabilizing the protein conformation that binds the tetrahedral intermediate(s) formed during glutamine hydrolysis. Inhibited by the product CTP, via allosteric rather than competitive inhibition. Functionally, catalyzes the ATP-dependent amination of UTP to CTP with either L-glutamine or ammonia as the source of nitrogen. Regulates intracellular CTP levels through interactions with the four ribonucleotide triphosphates. The chain is CTP synthase from Sulfurisphaera tokodaii (strain DSM 16993 / JCM 10545 / NBRC 100140 / 7) (Sulfolobus tokodaii).